The sequence spans 156 residues: 6,7-dimethyl-8-ribityllumazine synthase (156 aa).

5-amino-6-(D-ribitylamino)uracil contacts are provided by residues F23, 57–59, and 81–83; these read AFE and AVI. 86–87 provides a ligand contact to (2S)-2-hydroxy-3-oxobutyl phosphate; the sequence is AT. The active-site Proton donor is H89. Residue F114 coordinates 5-amino-6-(D-ribitylamino)uracil. Position 128 (R128) interacts with (2S)-2-hydroxy-3-oxobutyl phosphate.

This sequence belongs to the DMRL synthase family.

It carries out the reaction (2S)-2-hydroxy-3-oxobutyl phosphate + 5-amino-6-(D-ribitylamino)uracil = 6,7-dimethyl-8-(1-D-ribityl)lumazine + phosphate + 2 H2O + H(+). It functions in the pathway cofactor biosynthesis; riboflavin biosynthesis; riboflavin from 2-hydroxy-3-oxobutyl phosphate and 5-amino-6-(D-ribitylamino)uracil: step 1/2. In terms of biological role, catalyzes the formation of 6,7-dimethyl-8-ribityllumazine by condensation of 5-amino-6-(D-ribitylamino)uracil with 3,4-dihydroxy-2-butanone 4-phosphate. This is the penultimate step in the biosynthesis of riboflavin. The polypeptide is 6,7-dimethyl-8-ribityllumazine synthase (Sulfurovum sp. (strain NBC37-1)).